The primary structure comprises 89 residues: Small ribosomal subunit protein uS14A (89 aa).

This sequence belongs to the universal ribosomal protein uS14 family. In terms of assembly, part of the 30S ribosomal subunit. Contacts proteins S3 and S10.

Binds 16S rRNA, required for the assembly of 30S particles and may also be responsible for determining the conformation of the 16S rRNA at the A site. This Staphylococcus aureus (strain Newman) protein is Small ribosomal subunit protein uS14A.